Reading from the N-terminus, the 79-residue chain is Acyl carrier protein 2 (79 aa).

The Carrier domain occupies 2–77 (DDIETRVRKL…QAIDYLEEAV (76 aa)). Position 37 is an O-(pantetheine 4'-phosphoryl)serine (Ser37).

This sequence belongs to the acyl carrier protein (ACP) family. In terms of processing, 4'-phosphopantetheine is transferred from CoA to a specific serine of apo-ACP by AcpS. This modification is essential for activity because fatty acids are bound in thioester linkage to the sulfhydryl of the prosthetic group.

Its subcellular location is the cytoplasm. It participates in lipid metabolism; fatty acid biosynthesis. In terms of biological role, carrier of the growing fatty acid chain in fatty acid biosynthesis. In Pseudomonas aeruginosa (strain ATCC 15692 / DSM 22644 / CIP 104116 / JCM 14847 / LMG 12228 / 1C / PRS 101 / PAO1), this protein is Acyl carrier protein 2.